The following is a 633-amino-acid chain: Probable sodium/potassium/calcium exchanger CG1090 (633 aa).

An N-terminal signal peptide occupies residues 1-21 (MWNMGLLFLIYYCVSIYSAKG). Residues 22 to 111 (DTKDGQVLPL…PLMNKWARQH (90 aa)) lie on the Extracellular side of the membrane. The chain crosses the membrane as a helical span at residues 112-132 (GGLILHILVAVFTFFGLAIVC). The Cytoplasmic segment spans residues 133–157 (DEYFVASLDRLCEELKLSPDVAGAT). Residues 153 to 193 (VAGATFMAAGSSAPELATVVIGVFFAKDDIGISGVIGSAVF) form an Alpha-1 repeat. A helical membrane pass occupies residues 158–178 (FMAAGSSAPELATVVIGVFFA). The Extracellular portion of the chain corresponds to 179–181 (KDD). Residues 182–202 (IGISGVIGSAVFNIMFVISVC) form a helical membrane-spanning segment. At 203–220 (ALCSGTVCQLNWWPLVRD) the chain is on the cytoplasmic side. Transmembrane regions (helical) follow at residues 221–241 (CFFYCVSILVMLIIIFNDVIS) and 242–262 (CFESVVMLLCYVGYCVALHFN). Topologically, residues 263–427 (TELERWALGL…EPRRDPLLRP (165 aa)) are extracellular. Composition is skewed to polar residues over residues 298-310 (YTQESVGQTQGQK), 320-333 (AKPQSDYQDYSDPN), and 395-405 (QVVSTQATSAG). A disordered region spans residues 298-422 (YTQESVGQTQ…TDKQREPRRD (125 aa)). Positions 411-422 (KSTDKQREPRRD) are enriched in basic and acidic residues. A helical transmembrane segment spans residues 428–448 (MEGGLPALVSWYVVYPIHFLC). Residues 449–468 (KKTMPDCRQEQYRNWYPFTF) lie on the Cytoplasmic side of the membrane. Residues 469–489 (LMSMVWISFYSYFMVWMITVI) form a helical membrane-spanning segment. Residues 490–500 (GSTLAIPDTVM) are Extracellular-facing. Residues 501 to 521 (GLTFVAAGVSVPDALSSIAVI) traverse the membrane as a helical segment. Residues 506-537 (AAGVSVPDALSSIAVIKEGFGDMAVSNAIGSN) form an Alpha-2 repeat. The Cytoplasmic portion of the chain corresponds to 522–535 (KEGFGDMAVSNAIG). The chain crosses the membrane as a helical span at residues 536–556 (SNVFDILVCLGLPWFIQTAII). Over 557 to 568 (KPGSHVNVISKG) the chain is Extracellular. Residues 569 to 589 (LAYSTLSLFSTVVFLILSTHL) form a helical membrane-spanning segment. Residues 590–597 (NGWKLDKR) lie on the Cytoplasmic side of the membrane. A helical transmembrane segment spans residues 598-618 (LGIILMVWYLFFITLASLYEL). The Extracellular segment spans residues 619–633 (NVFGYMNPPECPSTY).

The protein belongs to the Ca(2+):cation antiporter (CaCA) (TC 2.A.19) family. SLC24A subfamily.

Its subcellular location is the membrane. May function in the removal and maintenance of calcium homeostasis. Transports one Ca(2+) and 1 K(+) in exchange for 4 Na(+). In Drosophila melanogaster (Fruit fly), this protein is Probable sodium/potassium/calcium exchanger CG1090.